The sequence spans 396 residues: Putative carbamoyltransferase YgeW (396 aa).

Carbamoyl phosphate is bound by residues 71-74 (STRT), Q98, 165-168 (HPTQ), and 330-331 (CL).

This sequence belongs to the aspartate/ornithine carbamoyltransferase superfamily. As to quaternary structure, homotrimer.

The protein is Putative carbamoyltransferase YgeW (ygeW) of Escherichia coli O157:H7.